The sequence spans 127 residues: Secreted RxLR effector protein 3 (127 aa).

Positions 1-20 are cleaved as a signal peptide; that stretch reads MRPPLLLFLTVTVLVSCASA. Residues 30–48 carry the RxLR-dEER motif; the sequence is RSLRSIKTTTNDDAAEEER.

This sequence belongs to the RxLR effector family.

It is found in the secreted. Its subcellular location is the host cell. In terms of biological role, secreted effector that partially suppresses elicitor-induced cell death in host and enhances virulence of P.parasitica. The protein is Secreted RxLR effector protein 3 of Phytophthora nicotianae (Potato buckeye rot agent).